A 37-amino-acid polypeptide reads, in one-letter code: Large ribosomal subunit protein bL36 (37 aa).

The protein belongs to the bacterial ribosomal protein bL36 family.

In Pelotomaculum thermopropionicum (strain DSM 13744 / JCM 10971 / SI), this protein is Large ribosomal subunit protein bL36.